A 76-amino-acid chain; its full sequence is Esculentin-2MT3 (76 aa).

A signal peptide spans 1–22; the sequence is MFTLKKSMLLLFFLGTISLSLC. Positions 23 to 37 are cleaved as a propeptide — removed in mature form; the sequence is EEERNADEDDGEKEV. Cysteines 70 and 76 form a disulfide.

This sequence belongs to the frog skin active peptide (FSAP) family. Esculentin subfamily. Expressed by the skin glands.

Its subcellular location is the secreted. In terms of biological role, antimicrobial peptide. In Amolops mantzorum (Sichuan torrent frog), this protein is Esculentin-2MT3.